We begin with the raw amino-acid sequence, 317 residues long: Ribosomal protein L11 methyltransferase (317 aa).

Thr158, Gly179, Asp201, and Asn244 together coordinate S-adenosyl-L-methionine.

It belongs to the methyltransferase superfamily. PrmA family.

The protein localises to the cytoplasm. It catalyses the reaction L-lysyl-[protein] + 3 S-adenosyl-L-methionine = N(6),N(6),N(6)-trimethyl-L-lysyl-[protein] + 3 S-adenosyl-L-homocysteine + 3 H(+). Methylates ribosomal protein L11. The polypeptide is Ribosomal protein L11 methyltransferase (Streptococcus agalactiae serotype Ia (strain ATCC 27591 / A909 / CDC SS700)).